The primary structure comprises 339 residues: MTEYTPKERLYRALRKQPVDRMPAVCFTQTATVEQMEASGAYWPEAHADAEKMATLAEAGHTVIGFEAVRVPFDITAEAELFGCGIKAGDLKQQPSVIKHVVKNMEDMEKLKGYSLNEGRVGLILEAIKILSEKYGKELPIIGSMIGPFSLAQHINGDAWFGNLFTGEEIVPALLDFCSDFNVAYAKAMVENGADTIAIIDPTASYELIGGEFYEKYALPYQKKIVDAMKELDVGTVLHICGNTTNGLSIMDKTGVNGISVDQRVDIKTATDNVENAIIIGNLDPVAILWNGTPEDVAEASKKVLDVGVGLLSPGCGIVSMTPSANLQKMVECAKNYKY.

Zn(2+) is bound by residues H239, C241, and C316.

Belongs to the uroporphyrinogen decarboxylase family. MtbA/MtaA subfamily. The cofactor is Zn(2+).

The enzyme catalyses methyl-Co(III)-[methylamine-specific corrinoid protein] + coenzyme M = Co(I)-[methylamine-specific corrinoid protein] + methyl-coenzyme M + H(+). Its pathway is one-carbon metabolism; methanogenesis from methylated amine. Methyltransferase involved in methanogenesis from methylamines methanol pathway. Catalyzes the transfer of the methyl group from the methylated corrinoid protein MtmC (MtmC1 or MtmC2) to coenzyme M, forming the substrate for coenzyme-B sulfoethylthiotransferase. This chain is Methylcobamide:CoM methyltransferase MtbA (mtbA), found in Methanosarcina acetivorans (strain ATCC 35395 / DSM 2834 / JCM 12185 / C2A).